A 96-amino-acid chain; its full sequence is Protein Vpr (96 aa).

Residues 1-42 (MEQAPEDQGPPREPYQEWALETLEELKNEAVRHFPRPWLHQL) form a homooligomerization region. Phosphoserine; by host is present on residues Ser79 and Ser96.

This sequence belongs to the HIV-1 VPR protein family. Homooligomer, may form homodimer. Interacts with p6-gag region of the Pr55 Gag precursor protein through a (Leu-X-X)4 motif near the C-terminus of the P6gag protein. Interacts with host UNG. May interact with host RAD23A/HHR23A. Interacts with host VPRBP/DCAF1, leading to hijack the CUL4A-RBX1-DDB1-DCAF1/VPRBP complex, mediating ubiquitination of host proteins such as TERT and ZGPAT and arrest of the cell cycle in G2 phase. In terms of processing, phosphorylated on several residues by host. These phosphorylations regulate VPR activity for the nuclear import of the HIV-1 pre-integration complex.

It localises to the virion. It is found in the host nucleus. The protein localises to the host extracellular space. During virus replication, may deplete host UNG protein, and incude G2-M cell cycle arrest. Acts by targeting specific host proteins for degradation by the 26S proteasome, through association with the cellular CUL4A-DDB1 E3 ligase complex by direct interaction with host VPRPB/DCAF-1. Cell cycle arrest reportedly occurs within hours of infection and is not blocked by antiviral agents, suggesting that it is initiated by the VPR carried into the virion. Additionally, VPR induces apoptosis in a cell cycle dependent manner suggesting that these two effects are mechanistically linked. Detected in the serum and cerebrospinal fluid of AIDS patient, VPR may also induce cell death to bystander cells. In terms of biological role, during virus entry, plays a role in the transport of the viral pre-integration (PIC) complex to the host nucleus. This function is crucial for viral infection of non-dividing macrophages. May act directly at the nuclear pore complex, by binding nucleoporins phenylalanine-glycine (FG)-repeat regions. In Pan (chimpanzees), this protein is Protein Vpr.